Reading from the N-terminus, the 329-residue chain is NTD biosynthesis operon regulator NtdR (329 aa).

The region spanning 2-56 (PTIDEIAKLCNVSKTTVSRVLNNHPYVSKEKRDMILKAINELDYTPNYLARNFRR) is the HTH lacI-type domain. A DNA-binding region (H-T-H motif) is located at residues 4–23 (IDEIAKLCNVSKTTVSRVLN).

Its function is as follows. Positively regulates the ntdABC operon and negatively regulates its own transcription. Binds to NTD to induce ntdABC transcription. This chain is NTD biosynthesis operon regulator NtdR (ntdR), found in Bacillus subtilis (strain 168).